Consider the following 175-residue polypeptide: DELTA-stichotoxin-She4b (175 aa).

Positions 1 to 10 (ALAGTIIAGA) are plays an important role in the hemolytic activity. The N-terminal region stretch occupies residues 9-28 (GASLTFQVLDKVLEELGKVS). Phosphocholine-binding residues include S52, V85, S103, P105, Y131, Y135, and Y136. Residues 103 to 118 (SVPFDYNWYSNWWDVK) form a trp-rich region, which is important for the binding to lipid membrane region. The Cell attachment site, crucial for protein stability motif lies at 141–143 (RGD).

In terms of assembly, octamer or nonamer in membranes. Monomer in the soluble state. Originally described as forming tetramer in the presence of a lipidic interface. Expressed in tentacles and mesenteric filaments.

It localises to the secreted. The protein localises to the nematocyst. It is found in the target cell membrane. Pore-forming protein that forms cations-selective hydrophilic pores of around 1 nm and causes cardiac stimulation and cytolysis. Pore formation is a multi-step process that involves specific recognition of membrane sphingomyelin (but neither cholesterol nor phosphatidylcholine) using aromatic rich region and adjacent phosphocholine (POC) binding site, firm binding to the membrane (mainly driven by hydrophobic interactions) accompanied by the transfer of the N-terminal region to the lipid-water interface and finally pore formation after oligomerization of monomers. Cytolytic effects include red blood cells hemolysis, platelet aggregation and lysis, cytotoxic and cytostatic effects on fibroblasts. Lethality in mammals has been ascribed to severe vasospasm of coronary vessels, cardiac arrhythmia, and inotropic effects. The protein is DELTA-stichotoxin-She4b of Stichodactyla helianthus (Sun anemone).